The sequence spans 322 residues: tRNA uridine(34) hydroxylase (322 aa).

Positions 125–219 (QSPDTVVIDA…YGKDPEVQGK (95 aa)) constitute a Rhodanese domain. Catalysis depends on Cys-179, which acts as the Cysteine persulfide intermediate.

The protein belongs to the TrhO family.

It carries out the reaction uridine(34) in tRNA + AH2 + O2 = 5-hydroxyuridine(34) in tRNA + A + H2O. Its function is as follows. Catalyzes oxygen-dependent 5-hydroxyuridine (ho5U) modification at position 34 in tRNAs. In Bacillus pumilus (strain SAFR-032), this protein is tRNA uridine(34) hydroxylase.